A 113-amino-acid polypeptide reads, in one-letter code: Large ribosomal subunit protein bL19 (113 aa).

It belongs to the bacterial ribosomal protein bL19 family.

Its function is as follows. This protein is located at the 30S-50S ribosomal subunit interface and may play a role in the structure and function of the aminoacyl-tRNA binding site. The sequence is that of Large ribosomal subunit protein bL19 from Mycolicibacterium gilvum (strain PYR-GCK) (Mycobacterium gilvum (strain PYR-GCK)).